Reading from the N-terminus, the 299-residue chain is uncharacterized protein (299 aa).

Helical transmembrane passes span 13–33 (ILFLFSHSFSSFLLPFQLHFM), 36–56 (AFVIGLIAALLAGIVGSFLML), 79–99 (SFGIPLIFGALLASIISVIII), 112–132 (TAIGIVFASFFGLGILLISVI), 151–171 (ITSEDLQNTSIILAIILLFFI), 201–221 (FLILVALTIIVSMKAIGVILV), 241–261 (YVILTSSIIGVSCSFSGMLLS), and 267–287 (PPGPTIVLITSLIFFILFLII).

The protein belongs to the ABC-3 integral membrane protein family.

It localises to the plastid. The protein resides in the cyanelle membrane. This is an uncharacterized protein from Cyanophora paradoxa.